The chain runs to 457 residues: UDP-N-acetylmuramate--L-alanine ligase (457 aa).

Residue 109-115 (GTDGKTT) coordinates ATP.

Belongs to the MurCDEF family.

The protein resides in the cytoplasm. The enzyme catalyses UDP-N-acetyl-alpha-D-muramate + L-alanine + ATP = UDP-N-acetyl-alpha-D-muramoyl-L-alanine + ADP + phosphate + H(+). Its pathway is cell wall biogenesis; peptidoglycan biosynthesis. Functionally, cell wall formation. This chain is UDP-N-acetylmuramate--L-alanine ligase, found in Thermotoga neapolitana (strain ATCC 49049 / DSM 4359 / NBRC 107923 / NS-E).